Reading from the N-terminus, the 512-residue chain is Peroxisomal N(1)-acetyl-spermine/spermidine oxidase (512 aa).

M1 carries the N-acetylmethionine modification. The propeptide occupies 1–6 (MQSGGR). Residues A25, E46, R54, and 70–71 (HW) each bind FAD. H73 and V195 together coordinate substrate. V248 lines the FAD pocket. Residue N321 coordinates substrate. FAD is bound by residues E473 and 482 to 483 (TT). Residues 510-512 (PRL) carry the Microbody targeting signal motif.

Belongs to the flavin monoamine oxidase family. As to quaternary structure, monomer. The cofactor is FAD.

It localises to the peroxisome. It is found in the cytoplasm. The enzyme catalyses N(1)-acetylspermine + O2 + H2O = 3-acetamidopropanal + spermidine + H2O2. The catalysed reaction is N(1)-acetylspermidine + O2 + H2O = 3-acetamidopropanal + putrescine + H2O2. It carries out the reaction N(1),N(12)-diacetylspermine + O2 + H2O = 3-acetamidopropanal + N(1)-acetylspermidine + H2O2. Its pathway is amine and polyamine metabolism; spermine metabolism. Flavoenzyme which catalyzes the oxidation of N(1)-acetylspermine to spermidine and is thus involved in the polyamine back-conversion. Can also oxidize N(1)-acetylspermidine to putrescine. Substrate specificity: N(1)-acetylspermine = N(1)-acetylspermidine &gt; N(1),N(12)-diacylspermine &gt;&gt; spermine. Does not oxidize spermidine. Plays an important role in the regulation of polyamine intracellular concentration. The chain is Peroxisomal N(1)-acetyl-spermine/spermidine oxidase (PAOX) from Bos taurus (Bovine).